Consider the following 241-residue polypeptide: 1-(5-phosphoribosyl)-5-[(5-phosphoribosylamino)methylideneamino] imidazole-4-carboxamide isomerase (241 aa).

Asp-11 functions as the Proton acceptor in the catalytic mechanism. Asp-130 acts as the Proton donor in catalysis.

This sequence belongs to the HisA/HisF family.

It is found in the cytoplasm. It catalyses the reaction 1-(5-phospho-beta-D-ribosyl)-5-[(5-phospho-beta-D-ribosylamino)methylideneamino]imidazole-4-carboxamide = 5-[(5-phospho-1-deoxy-D-ribulos-1-ylimino)methylamino]-1-(5-phospho-beta-D-ribosyl)imidazole-4-carboxamide. The protein operates within amino-acid biosynthesis; L-histidine biosynthesis; L-histidine from 5-phospho-alpha-D-ribose 1-diphosphate: step 4/9. The sequence is that of 1-(5-phosphoribosyl)-5-[(5-phosphoribosylamino)methylideneamino] imidazole-4-carboxamide isomerase from Acidothermus cellulolyticus (strain ATCC 43068 / DSM 8971 / 11B).